Here is a 239-residue protein sequence, read N- to C-terminus: dITP/XTP pyrophosphatase (239 aa).

7-12 (THNEGK) is a binding site for substrate. Asp-74 (proton acceptor) is an active-site residue. Residue Asp-74 participates in Mg(2+) binding. Substrate contacts are provided by residues Ser-75, 182–185 (FGYD), Lys-214, and 219–220 (HR).

The protein belongs to the HAM1 NTPase family. As to quaternary structure, homodimer. It depends on Mg(2+) as a cofactor.

The enzyme catalyses XTP + H2O = XMP + diphosphate + H(+). It carries out the reaction dITP + H2O = dIMP + diphosphate + H(+). The catalysed reaction is ITP + H2O = IMP + diphosphate + H(+). Functionally, pyrophosphatase that catalyzes the hydrolysis of nucleoside triphosphates to their monophosphate derivatives, with a high preference for the non-canonical purine nucleotides XTP (xanthosine triphosphate), dITP (deoxyinosine triphosphate) and ITP. Seems to function as a house-cleaning enzyme that removes non-canonical purine nucleotides from the nucleotide pool, thus preventing their incorporation into DNA/RNA and avoiding chromosomal lesions. The protein is dITP/XTP pyrophosphatase of Bifidobacterium animalis subsp. lactis (strain AD011).